The following is a 769-amino-acid chain: Glutathione biosynthesis bifunctional protein GshAB (769 aa).

The segment at 1 to 347 (MLDSFKENEA…QLADENENNI (347 aa)) is glutamate--cysteine ligase. An ATP-grasp domain is found at 514–768 (KLVLAEHGIR…IGDKILDFLF (255 aa)). Position 541–599 (541–599 (SLFEDKQIVVKPKSTNYGWGISIFKNKFTLEDYQEALNIAFSYDSSVIIEEFIPGDEFR)) interacts with ATP. Asp-721, Glu-738, and Asn-740 together coordinate Mg(2+). The Mn(2+) site is built by Asp-721, Glu-738, and Asn-740.

This sequence in the N-terminal section; belongs to the glutamate--cysteine ligase type 1 family. Type 2 subfamily. Monomer. Mg(2+) serves as cofactor. Requires Mn(2+) as cofactor.

The enzyme catalyses L-cysteine + L-glutamate + ATP = gamma-L-glutamyl-L-cysteine + ADP + phosphate + H(+). The catalysed reaction is gamma-L-glutamyl-L-cysteine + glycine + ATP = glutathione + ADP + phosphate + H(+). It functions in the pathway sulfur metabolism; glutathione biosynthesis; glutathione from L-cysteine and L-glutamate: step 1/2. It participates in sulfur metabolism; glutathione biosynthesis; glutathione from L-cysteine and L-glutamate: step 2/2. Its function is as follows. Synthesizes glutathione from L-glutamate and L-cysteine via gamma-L-glutamyl-L-cysteine. In Listeria innocua serovar 6a (strain ATCC BAA-680 / CLIP 11262), this protein is Glutathione biosynthesis bifunctional protein GshAB.